The following is a 403-amino-acid chain: Putative gustatory receptor 98b (403 aa).

At 1 to 11 (MVAQKSRLLAR) the chain is on the cytoplasmic side. A helical membrane pass occupies residues 12-32 (AFPYLDIFSVFALTPPPQSFG). Residues 33–48 (HTPHRRLRWYLMTGYV) lie on the Extracellular side of the membrane. The helical transmembrane segment at 49–69 (FYATAILATVFIVSYFNIIAI) threads the bilayer. Residues 70-83 (DEEVLEYNVSDFTR) lie on the Cytoplasmic side of the membrane. A helical transmembrane segment spans residues 84-104 (VMGNIQKSLYSIMAIANHLNM). Topologically, residues 105 to 144 (LINYRRLGGIYKDIADLEMDMDEASQCFGGQRQRFSFRFR) are extracellular. Residues 145-165 (MALCVGVWMILMVGSMPRLTM) traverse the membrane as a helical segment. Residues 166-191 (TAMGPFVSTLLKILTEFVMIMQQLKS) are Cytoplasmic-facing. Residues 192 to 212 (LEYCVFVLIIYELVLRLRRTL) form a helical membrane-spanning segment. At 213 to 259 (SQLQEEFQDCEQQDMLQALCVALKRNQLLLGRIWRLEGDVGSYFTPT) the chain is on the extracellular side. Residues 260-280 (MLLLFLYNGLTILHMVNWAYI) form a helical membrane-spanning segment. At 281–365 (NKFLYDSCCQ…LRFTCGGLFD (85 aa)) the chain is on the cytoplasmic side. Residues 366–386 (INLKYFGGLLVTIFGYIIILI) form a helical membrane-spanning segment. Residues 387-403 (QFKVQAIAANRYKKVVN) lie on the Extracellular side of the membrane.

The protein belongs to the insect chemoreceptor superfamily. Gustatory receptor (GR) family. Gr2a subfamily.

The protein resides in the cell membrane. Functionally, probable gustatory receptor which mediates acceptance or avoidance behavior, depending on its substrates. This is Putative gustatory receptor 98b (Gr98b) from Drosophila melanogaster (Fruit fly).